The primary structure comprises 182 residues: ATP synthase subunit b, chloroplastic (182 aa).

Residues 31–53 (IINISVVLGVLVYFGKGVLSNLL) traverse the membrane as a helical segment.

It belongs to the ATPase B chain family. F-type ATPases have 2 components, F(1) - the catalytic core - and F(0) - the membrane proton channel. F(1) has five subunits: alpha(3), beta(3), gamma(1), delta(1), epsilon(1). F(0) has four main subunits: a(1), b(1), b'(1) and c(10-14). The alpha and beta chains form an alternating ring which encloses part of the gamma chain. F(1) is attached to F(0) by a central stalk formed by the gamma and epsilon chains, while a peripheral stalk is formed by the delta, b and b' chains.

The protein localises to the plastid. It localises to the chloroplast thylakoid membrane. Functionally, f(1)F(0) ATP synthase produces ATP from ADP in the presence of a proton or sodium gradient. F-type ATPases consist of two structural domains, F(1) containing the extramembraneous catalytic core and F(0) containing the membrane proton channel, linked together by a central stalk and a peripheral stalk. During catalysis, ATP synthesis in the catalytic domain of F(1) is coupled via a rotary mechanism of the central stalk subunits to proton translocation. Its function is as follows. Component of the F(0) channel, it forms part of the peripheral stalk, linking F(1) to F(0). In Welwitschia mirabilis (Tree tumbo), this protein is ATP synthase subunit b, chloroplastic.